We begin with the raw amino-acid sequence, 251 residues long: 3-deoxy-manno-octulosonate cytidylyltransferase (251 aa).

The protein belongs to the KdsB family.

Its subcellular location is the cytoplasm. It carries out the reaction 3-deoxy-alpha-D-manno-oct-2-ulosonate + CTP = CMP-3-deoxy-beta-D-manno-octulosonate + diphosphate. It participates in nucleotide-sugar biosynthesis; CMP-3-deoxy-D-manno-octulosonate biosynthesis; CMP-3-deoxy-D-manno-octulosonate from 3-deoxy-D-manno-octulosonate and CTP: step 1/1. The protein operates within bacterial outer membrane biogenesis; lipopolysaccharide biosynthesis. Functionally, activates KDO (a required 8-carbon sugar) for incorporation into bacterial lipopolysaccharide in Gram-negative bacteria. The protein is 3-deoxy-manno-octulosonate cytidylyltransferase of Rhizobium johnstonii (strain DSM 114642 / LMG 32736 / 3841) (Rhizobium leguminosarum bv. viciae).